Consider the following 893-residue polypeptide: Translation initiation factor IF-2 (893 aa).

Disordered stretches follow at residues 51-203 (KEHG…AEAE) and 216-299 (EENE…TSMQ). 3 stretches are compositionally biased toward basic and acidic residues: residues 102-203 (ALEE…AEAE), 216-238 (EENE…DADY), and 245-261 (HARE…EQQP). The tr-type G domain maps to 392 to 561 (GRAPVVTIMG…LLQSEVLELT (170 aa)). Positions 401-408 (GHVDHGKT) are G1. Position 401-408 (401-408 (GHVDHGKT)) interacts with GTP. Residues 426–430 (GITQH) form a G2 region. Residues 447 to 450 (DTPG) are G3. GTP contacts are provided by residues 447–451 (DTPGH) and 501–504 (NKID). A G4 region spans residues 501–504 (NKID). The segment at 537–539 (SAK) is G5.

Belongs to the TRAFAC class translation factor GTPase superfamily. Classic translation factor GTPase family. IF-2 subfamily.

It is found in the cytoplasm. In terms of biological role, one of the essential components for the initiation of protein synthesis. Protects formylmethionyl-tRNA from spontaneous hydrolysis and promotes its binding to the 30S ribosomal subunits. Also involved in the hydrolysis of GTP during the formation of the 70S ribosomal complex. In Aliivibrio fischeri (strain ATCC 700601 / ES114) (Vibrio fischeri), this protein is Translation initiation factor IF-2.